A 316-amino-acid polypeptide reads, in one-letter code: 33 kDa chaperonin (316 aa).

Cystine bridges form between Cys-239/Cys-241 and Cys-272/Cys-275.

Belongs to the HSP33 family. Under oxidizing conditions two disulfide bonds are formed involving the reactive cysteines. Under reducing conditions zinc is bound to the reactive cysteines and the protein is inactive.

Its subcellular location is the cytoplasm. Redox regulated molecular chaperone. Protects both thermally unfolding and oxidatively damaged proteins from irreversible aggregation. Plays an important role in the bacterial defense system toward oxidative stress. In Clostridium perfringens (strain SM101 / Type A), this protein is 33 kDa chaperonin.